Here is a 633-residue protein sequence, read N- to C-terminus: MAHLKRLVKLHIKRHYHKKFWKLGAVIFFFIIVLVLMQREVSVQYSKEESRMERNMKNKNKMLDLMLEAVNNIKDAMPKMQIGAPVRQNIDAGERPCLQGYYTAAELKPVLDRPPQDSNAPGASGKAFKTTNLSVEEQKEKERGEAKHCFNAFASDRISLHRDLGPDTRPPECIEQKFKRCPPLPTTSVIIVFHNEAWSTLLRTVHSVLYSSPAILLKEIILVDDASVDEYLHDKLDEYVKQFSIVKIVRQRERKGLITARLLGATVATAETLTFLDAHCECFYGWLEPLLARIAENYTAVVSPDIASIDLNTFEFNKPSPYGSNHNRGNFDWSLSFGWESLPDHEKQRRKDETYPIKTPTFAGGLFSISKEYFEYIGSYDEEMEIWGGENIEMSFRVWQCGGQLEIMPCSVVGHVFRSKSPHSFPKGTQVIARNQVRLAEVWMDEYKEIFYRRNTDAAKIVKQKAFGDLSKRFEIKHRLQCKNFTWYLNNIYPEVYVPDLNPVISGYIKSVGQPLCLDVGENNQGGKPLIMYTCHGLGGNQYFEYSAQHEIRHNIQKELCLHAAQGLVQLKACTYKGHKTVVTGEQIWEIQKDQLLYNPFLKMCLSANGEHPSLVSCNPSDPLQKWILSQND.

The Cytoplasmic portion of the chain corresponds to 1–19 (MAHLKRLVKLHIKRHYHKK). A helical; Signal-anchor for type II membrane protein transmembrane segment spans residues 20–37 (FWKLGAVIFFFIIVLVLM). At 38 to 633 (QREVSVQYSK…LQKWILSQND (596 aa)) the chain is on the lumenal side. Residue Asn132 is glycosylated (N-linked (GlcNAc...) asparagine). The interval 184–293 (LPTTSVIIVF…YGWLEPLLAR (110 aa)) is catalytic subdomain A. Positions 277 and 279 each coordinate Mn(2+). N-linked (GlcNAc...) asparagine glycosylation occurs at Asn297. Positions 356–418 (PIKTPTFAGG…PCSVVGHVFR (63 aa)) are catalytic subdomain B. Residue His415 participates in Mn(2+) binding. A glycan (N-linked (GlcNAc...) asparagine) is linked at Asn484. The Ricin B-type lectin domain occupies 504-630 (VISGYIKSVG…SDPLQKWILS (127 aa)). Cys517 and Cys535 are oxidised to a cystine. UDP-N-acetyl-alpha-D-galactosamine-binding residues include Asp519, Glu522, His536, and Asn541. Disulfide bonds link Cys561–Cys574 and Cys605–Cys618.

This sequence belongs to the glycosyltransferase 2 family. GalNAc-T subfamily. The cofactor is Mn(2+). In terms of tissue distribution, expressed in organs that contain secretory epithelial glands. Highly expressed in pancreas, skin, kidney and testis. Weakly expressed in prostate, ovary, intestine and colon. Also expressed in placenta and lung and fetal lung and fetal kidney.

It is found in the golgi apparatus. The protein localises to the golgi stack membrane. The enzyme catalyses L-seryl-[protein] + UDP-N-acetyl-alpha-D-galactosamine = a 3-O-[N-acetyl-alpha-D-galactosaminyl]-L-seryl-[protein] + UDP + H(+). It catalyses the reaction L-threonyl-[protein] + UDP-N-acetyl-alpha-D-galactosamine = a 3-O-[N-acetyl-alpha-D-galactosaminyl]-L-threonyl-[protein] + UDP + H(+). The protein operates within protein modification; protein glycosylation. Functionally, catalyzes the initial reaction in O-linked oligosaccharide biosynthesis, the transfer of an N-acetyl-D-galactosamine residue to a serine or threonine residue on the protein receptor. Has activity toward HIV envelope glycoprotein gp120, EA2, MUC2, MUC1A and MUC5AC. Probably glycosylates fibronectin in vivo. Glycosylates FGF23. This chain is Polypeptide N-acetylgalactosaminyltransferase 3 (GALNT3), found in Homo sapiens (Human).